The following is a 268-amino-acid chain: Small ribosomal subunit protein uS2 (268 aa).

It belongs to the universal ribosomal protein uS2 family.

The sequence is that of Small ribosomal subunit protein uS2 from Caulobacter vibrioides (strain ATCC 19089 / CIP 103742 / CB 15) (Caulobacter crescentus).